Consider the following 716-residue polypeptide: DNA ligase (716 aa).

Residues 42-46 (DAEYD), 91-92 (SL), and Glu125 each bind NAD(+). Lys127 (N6-AMP-lysine intermediate) is an active-site residue. 4 residues coordinate NAD(+): Arg148, Glu184, Lys300, and Lys324. Residues Cys429, Cys432, Cys447, and Cys453 each coordinate Zn(2+). In terms of domain architecture, BRCT spans 638–716 (TASSPIAGKI…EEAWLQLIEG (79 aa)).

It belongs to the NAD-dependent DNA ligase family. LigA subfamily. The cofactor is Mg(2+). Mn(2+) serves as cofactor.

It carries out the reaction NAD(+) + (deoxyribonucleotide)n-3'-hydroxyl + 5'-phospho-(deoxyribonucleotide)m = (deoxyribonucleotide)n+m + AMP + beta-nicotinamide D-nucleotide.. In terms of biological role, DNA ligase that catalyzes the formation of phosphodiester linkages between 5'-phosphoryl and 3'-hydroxyl groups in double-stranded DNA using NAD as a coenzyme and as the energy source for the reaction. It is essential for DNA replication and repair of damaged DNA. The protein is DNA ligase of Bartonella henselae (strain ATCC 49882 / DSM 28221 / CCUG 30454 / Houston 1) (Rochalimaea henselae).